A 675-amino-acid polypeptide reads, in one-letter code: NADH-ubiquinone oxidoreductase 75 kDa subunit (675 aa).

The 79-residue stretch at 2–80 (KNISFKVNDF…SMNIYTNTLK (79 aa)) folds into the 2Fe-2S ferredoxin-type domain. 4 residues coordinate [2Fe-2S] cluster: cysteine 36, cysteine 47, cysteine 50, and cysteine 64. The 40-residue stretch at 80 to 119 (KVKKARESVLEFLLANHPLDCPICDQGGECDLQDQSVVFG) folds into the 4Fe-4S His(Cys)3-ligated-type domain. [4Fe-4S] cluster is bound by residues histidine 96, cysteine 100, cysteine 103, cysteine 109, cysteine 148, cysteine 151, cysteine 154, and cysteine 198. Residues 217 to 273 (LKSYNSIDVLDSLHSNIRVDIRGTKIMRILPRVNSELNEDWITDKIRFSYDSFRRQR) form the 4Fe-4S Mo/W bis-MGD-type domain.

The protein belongs to the complex I 75 kDa subunit family. Complex I is composed of about 30 different subunits. Requires [2Fe-2S] cluster as cofactor. The cofactor is [4Fe-4S] cluster.

The protein localises to the mitochondrion inner membrane. The enzyme catalyses a ubiquinone + NADH + 5 H(+)(in) = a ubiquinol + NAD(+) + 4 H(+)(out). Core subunit of the mitochondrial membrane respiratory chain NADH dehydrogenase (Complex I) that is believed to belong to the minimal assembly required for catalysis. Complex I functions in the transfer of electrons from NADH to the respiratory chain. The immediate electron acceptor for the enzyme is believed to be ubiquinone. This is the largest subunit of complex I and it is a component of the iron-sulfur (IP) fragment of the enzyme. It may form part of the active site crevice where NADH is oxidized. This Acanthamoeba castellanii (Amoeba) protein is NADH-ubiquinone oxidoreductase 75 kDa subunit (NAD11).